Consider the following 304-residue polypeptide: Recombination-associated protein RdgC (304 aa).

It belongs to the RdgC family.

The protein resides in the cytoplasm. Its subcellular location is the nucleoid. Its function is as follows. May be involved in recombination. The protein is Recombination-associated protein RdgC of Shewanella sp. (strain MR-4).